Here is a 901-residue protein sequence, read N- to C-terminus: Inner capsid protein VP3 (901 aa).

This sequence belongs to the turreted BTV-fold inner capsid family. In terms of assembly, homodecamer; each decamer is made up of two conformers of VP2, called VP2A and VP2B. 12 homodecamers assemble to form an icosahedral capsid.

It localises to the virion. Its function is as follows. Inner capsid protein that self-assembles to form an icosahedral capsid with a T=2 symmetry, which consists of 120 copies of VP2, with channels at each of its five-fold vertices. This capsid constitutes the innermost concentric layer of the viral mature particle. The protein is Inner capsid protein VP3 (Segment-3) of Bluetongue virus 13 (isolate USA) (BTV 13).